The primary structure comprises 419 residues: eIF5-mimic protein 2-A (419 aa).

The span at 1 to 15 (MNNQKQQKPTLTGQR) shows a compositional bias: polar residues. Residues 1–29 (MNNQKQQKPTLTGQRFKTRKRDEKERFDP) are disordered. The 168-residue stretch at 247–414 (NQQSIGARKE…KNAEEESESE (168 aa)) folds into the W2 domain.

It belongs to the BZW family.

Translation initiation regulator which may repress repeat-associated non-AUG (RAN) initiated translation probably by acting as a competitive inhibitor of eukaryotic translation initiation factor 5 (EIF5) function. Enhances histone H4 gene transcription but does not seem to bind DNA directly. The chain is eIF5-mimic protein 2-A (bzw1a) from Danio rerio (Zebrafish).